The sequence spans 520 residues: ATP-dependent RNA helicase CshA (520 aa).

The short motif at 2-30 is the Q motif element; it reads TKFSEFGLDEKIVKSVNRMGFEEATPIQE. Residues 33-203 form the Helicase ATP-binding domain; it reads IPLGLEGKDL…ERFMHSPELI (171 aa). An ATP-binding site is contributed by 46–53; that stretch reads AQTGTGKT. A DEAD box motif is present at residues 151-154; it reads DEAD. The Helicase C-terminal domain maps to 214–374; the sequence is LIEQFFVKVH…PLQAPTWDEA (161 aa). The segment covering 428–439 has biased composition (basic and acidic residues); sequence KTPVHITEERPL. Positions 428–520 are disordered; sequence KTPVHITEER…NKGNYSQKSK (93 aa). Composition is skewed to gly residues over residues 442 to 468 and 482 to 496; these read RGGG…GKGG and SGGG…GGGG.

It belongs to the DEAD box helicase family. CshA subfamily. As to quaternary structure, oligomerizes, may be a member of the RNA degradosome.

The protein resides in the cytoplasm. It carries out the reaction ATP + H2O = ADP + phosphate + H(+). Functionally, DEAD-box RNA helicase possibly involved in RNA degradation. Unwinds dsRNA in both 5'- and 3'-directions, has RNA-dependent ATPase activity. Involved in cold tolerance, motility and alcohol tolerance. This chain is ATP-dependent RNA helicase CshA, found in Listeria monocytogenes serovar 1/2a (strain ATCC BAA-679 / EGD-e).